The chain runs to 354 residues: Uroporphyrinogen decarboxylase (354 aa).

Substrate-binding positions include Arg-27–Arg-31, Asp-77, Tyr-154, Ser-209, and His-327.

Belongs to the uroporphyrinogen decarboxylase family. In terms of assembly, homodimer.

It is found in the cytoplasm. It carries out the reaction uroporphyrinogen III + 4 H(+) = coproporphyrinogen III + 4 CO2. It functions in the pathway porphyrin-containing compound metabolism; protoporphyrin-IX biosynthesis; coproporphyrinogen-III from 5-aminolevulinate: step 4/4. Catalyzes the decarboxylation of four acetate groups of uroporphyrinogen-III to yield coproporphyrinogen-III. In Shewanella pealeana (strain ATCC 700345 / ANG-SQ1), this protein is Uroporphyrinogen decarboxylase.